Consider the following 178-residue polypeptide: Caveolin-1 (178 aa).

Ser-2 is subject to N-acetylserine. At Ser-2 the chain carries Phosphoserine. The tract at residues 2 to 94 is required for homooligomerization; the sequence is SGGKYVDAEG…WKASFTTFTV (93 aa). The Cytoplasmic portion of the chain corresponds to 2-104; the sequence is SGGKYVDAEG…TKYWFYRLLS (103 aa). Lys-5 is subject to N6-acetyllysine; alternate. Lys-5 participates in a covalent cross-link: Glycyl lysine isopeptide (Lys-Gly) (interchain with G-Cter in ubiquitin); alternate. Position 6 is a phosphotyrosine (Tyr-6). Tyr-14 bears the Phosphotyrosine; by ABL1 mark. Residue Tyr-25 is modified to Phosphotyrosine. Residues Lys-26, Lys-30, Lys-39, Lys-47, and Lys-57 each participate in a glycyl lysine isopeptide (Lys-Gly) (interchain with G-Cter in ubiquitin) cross-link. The segment at 82–94 is interaction with CAVIN3; it reads DGIWKASFTTFTV. The segment at residues 105 to 125 is an intramembrane region (helical); that stretch reads ALLGIPLALLWGIYFAILSFL. Topologically, residues 126–178 are cytoplasmic; it reads HIWAVVPCIRSYLIEIQCISRVYSICIHTFCDPLFEAIGKVFSNIRATVQKEI. The interacts with SPRY1, SPRY2, SPRY3 and SPRY4 stretch occupies residues 131–142; it reads VPCIRSYLIEIQ. Residues Cys-133, Cys-143, and Cys-156 are each lipidated (S-palmitoyl cysteine). The tract at residues 149–160 is interacts with SPRY1, SPRY2, and SPRY4; sequence SICIHTFCDPLF. Residues 167-178 form an interacts with SPRY1, SPRY2, SPRY3 and SPRY4 region; sequence FSNIRATVQKEI.

This sequence belongs to the caveolin family. As to quaternary structure, homooligomer. Interacts with GLIPR2. Interacts with NOSTRIN. Interacts with SNAP25 and STX1A. Interacts (via the N-terminus) with DPP4; the interaction is direct. Interacts with CTNNB1, CDH1 and JUP. Interacts with PACSIN2; this interaction induces membrane tubulation. Interacts with SLC7A9. Interacts with BMX and BTK. Interacts with TGFBR1. Interacts with CAVIN3 (via leucine-zipper domain) in a cholesterol-sensitive manner. Interacts with CAVIN1. Interacts with EHD2 in a cholesterol-dependent manner. Forms a ternary complex with UBXN6 and VCP; mediates CAV1 targeting to lysosomes for degradation. Interacts with ABCG1; this interaction regulates ABCG1-mediated cholesterol efflux. Interacts with NEU3; this interaction enhances NEU3 sialidase activity within caveola. Interacts (via C-terminus) with SPRY1, SPRY2 (via C-terminus), SPRY3, and SPRY4. Interacts with IGFBP5; this interaction allows trafficking of IGFBP5 from the plasma membrane to the nucleus. Post-translationally, phosphorylated at Tyr-14 by ABL1 in response to oxidative stress. In terms of processing, ubiquitinated. Undergo monoubiquitination and multi- and/or polyubiquitination. Monoubiquitination of N-terminal lysines promotes integration in a ternary complex with UBXN6 and VCP which promotes oligomeric CAV1 targeting to lysosomes for degradation. Ubiquitinated by ZNRF1; leading to degradation and modulation of the TLR4-mediated immune response.

The protein resides in the golgi apparatus membrane. The protein localises to the cell membrane. It localises to the membrane. It is found in the caveola. Its subcellular location is the membrane raft. May act as a scaffolding protein within caveolar membranes. Forms a stable heterooligomeric complex with CAV2 that targets to lipid rafts and drives caveolae formation. Mediates the recruitment of CAVIN proteins (CAVIN1/2/3/4) to the caveolae. Interacts directly with G-protein alpha subunits and can functionally regulate their activity. Involved in the costimulatory signal essential for T-cell receptor (TCR)-mediated T-cell activation. Its binding to DPP4 induces T-cell proliferation and NF-kappa-B activation in a T-cell receptor/CD3-dependent manner. Recruits CTNNB1 to caveolar membranes and may regulate CTNNB1-mediated signaling through the Wnt pathway. Negatively regulates TGFB1-mediated activation of SMAD2/3 by mediating the internalization of TGFBR1 from membrane rafts leading to its subsequent degradation. Binds 20(S)-hydroxycholesterol (20(S)-OHC). The chain is Caveolin-1 (CAV1) from Ornithorhynchus anatinus (Duckbill platypus).